The chain runs to 199 residues: MFRLLMSFNNFKDLISLMSLSFAFQNSFSLFNCSIRSRSLLICVFKFCSLFMFSKFFCFLRMRNRCDASVFFLLRSCLILSSSLEVLTGASSSFTTTAVVAATFPFLGSRSFLNCETSWPLFIMLMSSSALPLLTSSNDSKREPSSESLDIRFCRCSERLFTFIPFLLAMSMFVDFFSHPCFALILTNKTICLRNYHWL.

Transmembrane regions (helical) follow at residues leucine 40 to leucine 60, valine 86 to phenylalanine 106, threonine 117 to serine 137, and phenylalanine 166 to leucine 186.

The protein localises to the membrane. This is an uncharacterized protein from Saccharomyces cerevisiae (strain ATCC 204508 / S288c) (Baker's yeast).